We begin with the raw amino-acid sequence, 425 residues long: 5-aminovalerate aminotransferase DavT (425 aa).

Pyridoxal 5'-phosphate contacts are provided by residues 112–113 (GS), Y139, and 240–243 (DEVQ). K269 is subject to N6-(pyridoxal phosphate)lysine. T298 contributes to the pyridoxal 5'-phosphate binding site.

This sequence belongs to the class-III pyridoxal-phosphate-dependent aminotransferase family. The cofactor is pyridoxal 5'-phosphate.

The catalysed reaction is 5-aminopentanoate + 2-oxoglutarate = 5-oxopentanoate + L-glutamate. In terms of biological role, catalyzes the conversion of 5-aminovalerate to 5-oxopentanoate. The protein is 5-aminovalerate aminotransferase DavT (davT) of Pseudomonas putida (strain ATCC 47054 / DSM 6125 / CFBP 8728 / NCIMB 11950 / KT2440).